The primary structure comprises 74 residues: Delta-actitoxin-Amc3a (74 aa).

Positions 1-19 are cleaved as a signal peptide; it reads MNRLIILVVAAVFLGMASA. A propeptide spanning residues 20-24 is cleaved from the precursor; that stretch reads EEDVL. Pro29 is modified (hydroxyproline). 3 cysteine pairs are disulfide-bonded: Cys30–Cys70, Cys32–Cys60, and Cys53–Cys71. Gln73 carries the glutamine amide modification.

The protein belongs to the sea anemone sodium channel inhibitory toxin family. Type I subfamily.

The protein resides in the secreted. It is found in the nematocyst. Inhibits voltage-gated sodium channels (Nav). This is Delta-actitoxin-Amc3a from Antheopsis maculata (Sea anemone).